Here is a 156-residue protein sequence, read N- to C-terminus: S-ribosylhomocysteine lyase (156 aa).

Residues histidine 56, histidine 60, and cysteine 123 each coordinate Fe cation.

Belongs to the LuxS family. As to quaternary structure, homodimer. Fe cation is required as a cofactor.

The enzyme catalyses S-(5-deoxy-D-ribos-5-yl)-L-homocysteine = (S)-4,5-dihydroxypentane-2,3-dione + L-homocysteine. Involved in the synthesis of autoinducer 2 (AI-2) which is secreted by bacteria and is used to communicate both the cell density and the metabolic potential of the environment. The regulation of gene expression in response to changes in cell density is called quorum sensing. Catalyzes the transformation of S-ribosylhomocysteine (RHC) to homocysteine (HC) and 4,5-dihydroxy-2,3-pentadione (DPD). This is S-ribosylhomocysteine lyase from Staphylococcus aureus (strain bovine RF122 / ET3-1).